An 82-amino-acid polypeptide reads, in one-letter code: Cytochrome c oxidase subunit 8, mitochondrial (82 aa).

The N-terminal 31 residues, 1–31 (MFSRVALRAAPRQQPFSLVARRTFQTTRAQL), are a transit peptide targeting the mitochondrion. Residues 32–52 (SSPYHYPEGPRSNLPFNPKTR) are Mitochondrial matrix-facing. Residues 53 to 75 (FFWFRYLMYCVVGFGSPVAIAVW) form a helical membrane-spanning segment. Over 76-82 (QTYRPRS) the chain is Mitochondrial intermembrane.

It belongs to the cytochrome c oxidase VIIc family. In terms of assembly, component of the cytochrome c oxidase (complex IV, CIV), a multisubunit enzyme composed of 11 subunits. The complex is composed of a catalytic core of 3 subunits Cox1, Cox2 and Cox3, encoded in the mitochondrial DNA, and 8 supernumerary subunits Cox4, Cox5a/Cox5, Cox6, Cox7, Cox8, Cox7a/Cox9, Cox6b/Cox12 and Cox6a/Cox13, which are encoded in the nuclear genome. The complex exists as a monomer or a dimer and forms respiratory supercomplexes (SCs) in the inner mitochondrial membrane with NADH-ubiquinone oxidoreductase (complex I, CI) and ubiquinol-cytochrome c oxidoreductase (cytochrome b-c1 complex, complex III, CIII), resulting in various different assemblies (supercomplexes I(1)IV(1), I(1)III(3)IV(2), III(2)IV(1) and III(2)IV(2) as well as larger supercomplexes of compositions like I(1)III(2)IV(5-6)).

It localises to the mitochondrion inner membrane. The protein operates within energy metabolism; oxidative phosphorylation. Functionally, component of the cytochrome c oxidase, the last enzyme in the mitochondrial electron transport chain which drives oxidative phosphorylation. The respiratory chain contains 3 multisubunit complexes succinate dehydrogenase (complex II, CII), ubiquinol-cytochrome c oxidoreductase (cytochrome b-c1 complex, complex III, CIII) and cytochrome c oxidase (complex IV, CIV), that cooperate to transfer electrons derived from NADH and succinate to molecular oxygen, creating an electrochemical gradient over the inner membrane that drives transmembrane transport and the ATP synthase. Cytochrome c oxidase is the component of the respiratory chain that catalyzes the reduction of oxygen to water. Electrons originating from reduced cytochrome c in the intermembrane space (IMS) are transferred via the dinuclear copper A center (CU(A)) of Cox2 and heme A of Cox1 to the active site in Cox1, a binuclear center (BNC) formed by heme A3 and copper B (CU(B)). The BNC reduces molecular oxygen to 2 water molecules using 4 electrons from cytochrome c in the IMS and 4 protons from the mitochondrial matrix. This chain is Cytochrome c oxidase subunit 8, mitochondrial (cox-15), found in Neurospora crassa (strain ATCC 24698 / 74-OR23-1A / CBS 708.71 / DSM 1257 / FGSC 987).